We begin with the raw amino-acid sequence, 827 residues long: Villin-1 (827 aa).

Positions 1–126 (MTKLSAQVKG…IRKGGVASGM (126 aa)) are necessary for homodimerization. The tract at residues 1-734 (MTKLSAQVKG…YEDLKAELGN (734 aa)) is core. One copy of the Gelsolin-like 1 repeat lies at 27-76 (MQMVPVPSNSFGSFFDGDCYVIQAIHKTGSNLSYDIHYWIGQASSQDEQG). LPA/PIP2-binding site stretches follow at residues 112–119 (KKGIVIRK) and 138–146 (RLLHVKGKR). Gelsolin-like repeat units follow at residues 148 to 188 (VVAG…MERL) and 265 to 309 (VVVR…QEKK). Ser-366 is modified (phosphoserine). Gelsolin-like repeat units follow at residues 407–457 (NLEL…DEIT), 528–568 (TKAF…DERE), and 631–672 (FLAT…DEKK). Ser-735 is subject to Phosphoserine. A headpiece region spans residues 735 to 827 (SGDWSQITAE…QNLKKEKGLF (93 aa)). An HP domain is found at 761–827 (SGPLPIFPLE…QNLKKEKGLF (67 aa)). The LPA/PIP2-binding site 3 stretch occupies residues 816 to 824 (KQQNLKKEK).

The protein belongs to the villin/gelsolin family. Monomer. Homodimer; homodimerization is necessary for actin-bundling. Associates with F-actin; phosphorylation at tyrosine residues decreases the association with F-actin. Interacts (phosphorylated at C-terminus tyrosine phosphorylation sites) with PLCG1 (via the SH2 domains). Interacts (phosphorylated form) with PLCG1; the interaction is enhanced by hepatocyte growth factor (HGF). Post-translationally, phosphorylated on tyrosine residues by SRC. The unphosphorylated form increases the initial rate of actin-nucleating activity, whereas the tyrosine-phosphorylated form inhibits actin-nucleating activity, enhances actin-bundling activity and enhances actin-severing activity by reducing high Ca(2+) requirements. The tyrosine-phosphorylated form does not regulate actin-capping activity. Tyrosine phosphorylation is essential for cell migration: tyrosine phosphorylation sites in the N-terminus half regulate actin reorganization and cell morphology, whereas tyrosine phosphorylation sites in the C-terminus half regulate cell migration via interaction with PLCG1. Tyrosine phosphorylation is induced by epidermal growth factor (EGF) and stimulates cell migration.

Its subcellular location is the cytoplasm. The protein resides in the cytoskeleton. It is found in the cell projection. It localises to the lamellipodium. The protein localises to the ruffle. Its subcellular location is the microvillus. The protein resides in the filopodium tip. It is found in the filopodium. Functionally, epithelial cell-specific Ca(2+)-regulated actin-modifying protein that modulates the reorganization of microvillar actin filaments. Plays a role in the actin nucleation, actin filament bundle assembly, actin filament capping and severing. Binds phosphatidylinositol 4,5-bisphosphate (PIP2) and lysophosphatidic acid (LPA); binds LPA with higher affinity than PIP2. Binding to LPA increases its phosphorylation by SRC and inhibits all actin-modifying activities. Binding to PIP2 inhibits actin-capping and -severing activities but enhances actin-bundling activity. Regulates the intestinal epithelial cell morphology, cell invasion, cell migration and apoptosis. Protects against apoptosis induced by dextran sodium sulfate (DSS) in the gastrointestinal epithelium. Appears to regulate cell death by maintaining mitochondrial integrity. Enhances hepatocyte growth factor (HGF)-induced epithelial cell motility, chemotaxis and wound repair. The chain is Villin-1 (VIL1) from Bos taurus (Bovine).